The following is a 239-amino-acid chain: MLTKEQLQHLKNELEQTKKDILNRFKDNDHFQLNSAFPYDSWGELSAYDNHPGDQATELYEREKDIALDLHEREHLRDIEHSLKAIENGTYGICEVSGKEIPFERLEALPTATTLAEYSSQDVVSKDRPIEEETPFGQFEFDDDEEIRAPYDSEDSYQDVEKYGNSQTPQDMENPPLSYDDMTMNAEENIGNTESYENFIATDITGKEITVYQSRAHERYEEELDEEGIMTTFGDLHAD.

The dksA C4-type; degenerate zinc finger occupies 94–114; that stretch reads CEVSGKEIPFERLEALPTATT. Positions 133-158 are enriched in acidic residues; sequence ETPFGQFEFDDDEEIRAPYDSEDSYQ. Residues 133-182 form a disordered region; it reads ETPFGQFEFDDDEEIRAPYDSEDSYQDVEKYGNSQTPQDMENPPLSYDDM.

This is an uncharacterized protein from Bacillus subtilis (strain 168).